The sequence spans 117 residues: Protein GL2-INTERACTING REPRESSOR 2 (117 aa).

A disordered region spans residues 1–56 (MSRRNKNGPKLELRLNLSPPPSQASQMSLVRSPNRSNTTSPSSCVSSETNQEENET). Residues 10–15 (KLELRL) carry the EAR motif. Over residues 31–49 (RSPNRSNTTSPSSCVSSET) the composition is skewed to low complexity.

As to quaternary structure, interacts with GL2. Interacts with TPL.

Its subcellular location is the nucleus. Acts as a negative regulator of root hair development redundantly with GIR1. GIR1 and GIR2 may function as adapter proteins that associate with GL2 and participate in the control of root hair formation. GIR1 and GIR2 may function as adapter proteins that associate with TPL and participate in the repression of root gene expression. This chain is Protein GL2-INTERACTING REPRESSOR 2, found in Arabidopsis thaliana (Mouse-ear cress).